Here is a 589-residue protein sequence, read N- to C-terminus: Formate--tetrahydrofolate ligase (589 aa).

Position 74 to 81 (74 to 81 (TPFGEGKS)) interacts with ATP.

It belongs to the formate--tetrahydrofolate ligase family.

It catalyses the reaction (6S)-5,6,7,8-tetrahydrofolate + formate + ATP = (6R)-10-formyltetrahydrofolate + ADP + phosphate. It participates in one-carbon metabolism; tetrahydrofolate interconversion. This Thermodesulfovibrio yellowstonii (strain ATCC 51303 / DSM 11347 / YP87) protein is Formate--tetrahydrofolate ligase.